Here is an 806-residue protein sequence, read N- to C-terminus: Transitional endoplasmic reticulum ATPase (806 aa).

A Phosphoserine modification is found at Ser3. ATP is bound by residues 247–253 (PGTGKTL), Asn348, His384, and 521–526 (GCGKTL). Disordered stretches follow at residues 708–727 (RRERERQTNPSAMEVEEDDP) and 768–806 (FGSFRFPSSNQGGSGPSQGSSGGGGGNVFNEDNDDDLYG). A compositionally biased stretch (low complexity) spans 768–778 (FGSFRFPSSNQ). A compositionally biased stretch (gly residues) spans 779-794 (GGSGPSQGSSGGGGGN).

It belongs to the AAA ATPase family. Homohexamer.

It localises to the cytoplasm. Its subcellular location is the cytosol. The protein resides in the endoplasmic reticulum. It is found in the nucleus. It carries out the reaction ATP + H2O = ADP + phosphate + H(+). In terms of biological role, necessary for the fragmentation of Golgi stacks during mitosis and for their reassembly after mitosis. Involved in the formation of the nuclear envelope, and of the transitional endoplasmic reticulum (tER). The transfer of membranes from the endoplasmic reticulum to the Golgi apparatus occurs via 50-70 nm transition vesicles which derive from part-rough, part-smooth transitional elements of the endoplasmic reticulum (tER). Vesicle budding from the tER is an ATP-dependent process. Also involved in DNA damage response: recruited to double-strand breaks (DSBs) sites and promotes the recruitment of tp53bp1 at DNA damage sites. Together with sprtn metalloprotease, involved in the repair of covalent DNA-protein cross-links (DPCs) during DNA synthesis. Involved in interstrand cross-link repair in response to replication stress by mediating unloading of the ubiquitinated CMG helicase complex. Enhances cell cycle progression and inhibits apoptosis at low temperatures. Essential for the maturation of ubiquitin-containing autophagosomes and the clearance of ubiquitinated protein by autophagy. Acts as a negative regulator of type I interferon production by promoting ubiquitination of RIGI. May play a role in the ubiquitin-dependent sorting of membrane proteins to lysosomes where they undergo degradation. May more particularly play a role in caveolins sorting in cells. By controlling the steady-state expression of the IGF1R receptor, indirectly regulates the insulin-like growth factor receptor signaling pathway. This Danio rerio (Zebrafish) protein is Transitional endoplasmic reticulum ATPase.